We begin with the raw amino-acid sequence, 345 residues long: Beta-hexosaminidase (345 aa).

Substrate contacts are provided by residues D60, R68, R132, and 162 to 163; that span reads KH. The Proton donor/acceptor role is filled by H175. Catalysis depends on D247, which acts as the Nucleophile.

It belongs to the glycosyl hydrolase 3 family. NagZ subfamily.

It localises to the cytoplasm. The catalysed reaction is Hydrolysis of terminal non-reducing N-acetyl-D-hexosamine residues in N-acetyl-beta-D-hexosaminides.. Its pathway is cell wall biogenesis; peptidoglycan recycling. In terms of biological role, plays a role in peptidoglycan recycling by cleaving the terminal beta-1,4-linked N-acetylglucosamine (GlcNAc) from peptide-linked peptidoglycan fragments, giving rise to free GlcNAc, anhydro-N-acetylmuramic acid and anhydro-N-acetylmuramic acid-linked peptides. In Actinobacillus pleuropneumoniae serotype 3 (strain JL03), this protein is Beta-hexosaminidase.